The primary structure comprises 333 residues: Bacteriocin helveticin-J (333 aa).

Functionally, this heat-sensitive bacteriocin inhibits the growth of closely related Lactobacillus species. The protein is Bacteriocin helveticin-J (hlv) of Lactobacillus helveticus (Lactobacillus suntoryeus).